Reading from the N-terminus, the 304-residue chain is MHLQFLGTGAGTPSRERNVTSIALDLHGVRNATWLFDCGEGTQHQILRTPIKPGRIEKIFITHLHGDHLFGLPGLLTSRSMNGCVEPMTLYGPAGIKTFVETSLSLSGSWLTFPLEIIEISAGEVFQDAHFRVTAYPLTHPVECYGYRIDELDKPGALDAQKLAAHGVPAGPHFYQLKQGRSVTLDDGRVINGWDYVGSKIKGRSLAIFGDTSPTAAASELAAGVDIMVHEATLEVAMEEKANGRGHSSTVQAARVAQQSGAKKLIITHLSSRYLHHDCERLLAECRAVFPHTEMAHDFALFPC.

7 residues coordinate Zn(2+): H63, H65, D67, H68, H140, D211, and H269. D67 serves as the catalytic Proton acceptor.

Belongs to the RNase Z family. RNase BN subfamily. As to quaternary structure, homodimer. It depends on Zn(2+) as a cofactor.

In terms of biological role, zinc phosphodiesterase, which has both exoribonuclease and endoribonuclease activities. This Erwinia tasmaniensis (strain DSM 17950 / CFBP 7177 / CIP 109463 / NCPPB 4357 / Et1/99) protein is Ribonuclease BN.